A 541-amino-acid polypeptide reads, in one-letter code: DNA ligase 1 (541 aa).

Residue E234 coordinates ATP. Catalysis depends on K236, which acts as the N6-AMP-lysine intermediate. ATP contacts are provided by R241, R256, E286, F325, R398, and K404.

Belongs to the ATP-dependent DNA ligase family. It depends on Mg(2+) as a cofactor.

The enzyme catalyses ATP + (deoxyribonucleotide)n-3'-hydroxyl + 5'-phospho-(deoxyribonucleotide)m = (deoxyribonucleotide)n+m + AMP + diphosphate.. Its function is as follows. DNA ligase that seals nicks in double-stranded DNA during DNA replication, DNA recombination and DNA repair. The sequence is that of DNA ligase 1 from Korarchaeum cryptofilum (strain OPF8).